The following is a 525-amino-acid chain: M-phase inducer phosphatase 1 (525 aa).

The segment at 1 to 42 (MELGPEPPHRRRLLFTCSPTPAPQPTGKVQFGASRAGGLSPV) is disordered. Positions 74-84 (MGSSESTDSGF) match the Phosphodegron motif. A Phosphoserine; by CHEK1 modification is found at S76. Residues S79, S82, and S88 each carry the phosphoserine; by NEK11 modification. S124 carries the post-translational modification Phosphoserine; by CHEK1 and CHEK2. The short motif at 141–143 (KEN) is the KEN box element. Phosphoserine; by CHEK1 is present on S178. The interval 260-318 (FDSPSPCSSTSSCSTRAVKRADRSHEESPRGTKRRKSSEASPVKADVPEPTQLPHQSLS) is disordered. Residues 262–274 (SPSPCSSTSSCST) are compositionally biased toward low complexity. The span at 278–289 (KRADRSHEESPR) shows a compositional bias: basic and acidic residues. Phosphoserine; by CHEK1 and CHEK2 is present on residues S283 and S296. In terms of domain architecture, Rhodanese spans 377-483 (LIKEFVIIDC…FFLKCQSHCE (107 aa)). Residue C432 is part of the active site. T508 carries the phosphothreonine; by CHEK1 modification. S514 and S520 each carry phosphoserine; by PLK3.

The protein belongs to the MPI phosphatase family. As to quaternary structure, interacts with CCNB1/cyclin B1. Interacts with YWHAE/14-3-3 epsilon when phosphorylated. Interacts with CUL1 specifically when CUL1 is neddylated and active. Interacts with BTRC/BTRCP1 and FBXW11/BTRCP2. Interactions with CUL1, BTRC and FBXW11 are enhanced upon DNA damage. Interacts with CHEK2; mediates CDC25A phosphorylation and degradation in response to infrared-induced DNA damages. Interacts with HSP90AB1; prevents heat shock-mediated CDC25A degradation and contributes to cell cycle progression. In terms of processing, phosphorylated by CHEK1 on Ser-76, Ser-124, Ser-178, Ser-283, Ser-296 and Thr-508 during checkpoint mediated cell cycle arrest. Also phosphorylated by CHEK2 on Ser-124, Ser-283, and Ser-296 during checkpoint mediated cell cycle arrest. Phosphorylation on Ser-178 and Thr-508 creates binding sites for YWHAE/14-3-3 epsilon which inhibits CDC25A. Phosphorylation on Ser-76, Ser-124, Ser-178, Ser-283 and Ser-296 may also promote ubiquitin-dependent proteolysis of CDC25A by the SCF complex. Phosphorylation of CDC25A at Ser-76 by CHEK1 primes it for subsequent phosphorylation at Ser-79, Ser-82 and Ser-88 by NEK11. Phosphorylation by NEK11 is required for BTRC-mediated polyubiquitination and degradation. Phosphorylation by PIM1 leads to an increase in phosphatase activity. Phosphorylated by PLK3 following DNA damage, leading to promote its ubiquitination and degradation. Post-translationally, ubiquitinated by the anaphase promoting complex/cyclosome (APC/C) ubiquitin ligase complex that contains FZR1/CDH1 during G1 phase leading to its degradation by the proteasome. Ubiquitinated by a SCF complex containing BTRC and FBXW11 during S phase leading to its degradation by the proteasome. Deubiquitination by USP17L2/DUB3 leads to its stabilization.

The catalysed reaction is O-phospho-L-tyrosyl-[protein] + H2O = L-tyrosyl-[protein] + phosphate. Its activity is regulated as follows. Stimulated by B-type cyclins. Stimulated by PIM1-mediated phosphorylation. In terms of biological role, tyrosine protein phosphatase which functions as a dosage-dependent inducer of mitotic progression. Directly dephosphorylates CDK1 and stimulates its kinase activity. Also dephosphorylates CDK2 in complex with cyclin-E, in vitro. The sequence is that of M-phase inducer phosphatase 1 (Cdc25a) from Rattus norvegicus (Rat).